The primary structure comprises 58 residues: UPF0391 membrane protein COXBURSA331_A2131 (58 aa).

Transmembrane regions (helical) follow at residues 3-23 (FWVL…FTGI) and 30-50 (IAKI…IAML).

Belongs to the UPF0391 family.

The protein resides in the cell membrane. In Coxiella burnetii (strain RSA 331 / Henzerling II), this protein is UPF0391 membrane protein COXBURSA331_A2131.